The primary structure comprises 318 residues: Methionyl-tRNA formyltransferase (318 aa).

Residue 110-113 (SLLP) participates in (6S)-5,6,7,8-tetrahydrofolate binding.

The protein belongs to the Fmt family.

It carries out the reaction L-methionyl-tRNA(fMet) + (6R)-10-formyltetrahydrofolate = N-formyl-L-methionyl-tRNA(fMet) + (6S)-5,6,7,8-tetrahydrofolate + H(+). Attaches a formyl group to the free amino group of methionyl-tRNA(fMet). The formyl group appears to play a dual role in the initiator identity of N-formylmethionyl-tRNA by promoting its recognition by IF2 and preventing the misappropriation of this tRNA by the elongation apparatus. The protein is Methionyl-tRNA formyltransferase of Lacticaseibacillus paracasei (strain ATCC 334 / BCRC 17002 / CCUG 31169 / CIP 107868 / KCTC 3260 / NRRL B-441) (Lactobacillus paracasei).